Consider the following 353-residue polypeptide: C-X-C chemokine receptor type 4 (353 aa).

The tract at residues 1–22 (MDGFRIYPSDNYTEDDLGSGDY) is important for chemokine binding and signaling. Residues 1–39 (MDGFRIYPSDNYTEDDLGSGDYDSMKEPCFREENAHFNR) lie on the Extracellular side of the membrane. The residue at position 7 (tyrosine 7) is a Sulfotyrosine. N-linked (GlcNAc...) asparagine glycosylation occurs at asparagine 11. Position 12 is a sulfotyrosine (tyrosine 12). Residue serine 19 is glycosylated (O-linked (Xyl...) (chondroitin sulfate) serine). Sulfotyrosine is present on tyrosine 22. 2 disulfides stabilise this stretch: cysteine 29–cysteine 275 and cysteine 110–cysteine 187. Residues 40 to 64 (IFLPTVYSIIFLTGIVGNGLVILVM) traverse the membrane as a helical segment. Residues 65–78 (GYQKKLRSMTDKYR) lie on the Cytoplasmic side of the membrane. A helical transmembrane segment spans residues 79-100 (LHLSVADLLFVLTLPFWAVDAV). Residues 95 to 98 (WAVD) form a chemokine binding region. The Extracellular portion of the chain corresponds to 101 to 111 (ANWYFGKFLCK). Residues 112 to 131 (AVHVIYTVNLYSSVLILAFI) traverse the membrane as a helical segment. Residues 114-118 (HVIYT) form a chemokine binding region. Residues 132 to 155 (SLDRYLAIVHATNSQRPRKLLAEK) are Cytoplasmic-facing. Positions 134-136 (DRY) match the Important for signaling motif. The tract at residues 136 to 148 (YLAIVHATNSQRP) is involved in dimerization; when bound to chemokine. A helical transmembrane segment spans residues 156–175 (VVYVGVWIPALLLTIPDFIF). Residues 176 to 196 (ANVREADGRYICDRFYPSDSW) are Extracellular-facing. The interval 187 to 191 (CDRFY) is chemokine binding, important for signaling. Residues 192–211 (PSDSWLVVFQFQHIMVGLIL) form an involved in dimerization region. A helical membrane pass occupies residues 197–217 (LVVFQFQHIMVGLILPGIVIL). At 218–242 (SCYCIIISKLSHSKGYQKRKALKTT) the chain is on the cytoplasmic side. The chain crosses the membrane as a helical span at residues 243 to 262 (VILILAFFACWLPYYIGISI). Residues 263 to 283 (DSFILLEIIKQGCEFESTVHK) are Extracellular-facing. Positions 267-269 (LLE) are involved in dimerization. A helical transmembrane segment spans residues 284-303 (WISITEALAFFHCCLNPILY). Topologically, residues 304 to 353 (AFLGAKFKTSAQHALTSVSRGSSLKILSKGKRGGHSSVSTESESSSFHSS) are cytoplasmic. Serine 320 and serine 322 each carry phosphoserine. Serine 325 and serine 326 each carry phosphoserine; by PKC and GRK6. The interval 330–353 (LSKGKRGGHSSVSTESESSSFHSS) is disordered. Serine 331 carries the phosphoserine; by GRK6 modification. Lysine 332 participates in a covalent cross-link: Glycyl lysine isopeptide (Lys-Gly) (interchain with G-Cter in ubiquitin). The segment covering 338-353 (HSSVSTESESSSFHSS) has biased composition (low complexity). Serine 340 is modified (phosphoserine; by GRK6). Serine 349 and serine 352 each carry phosphoserine.

The protein belongs to the G-protein coupled receptor 1 family. In terms of assembly, monomer. Can form homodimers. Interacts with CD164. Interacts with ARRB2; the interaction is dependent on the C-terminal phosphorylation of CXCR4 and allows activation of MAPK1 and MAPK3. Interacts with ARR3; the interaction is dependent on the C-terminal phosphorylation of CXCR4 and modulates calcium mobilization. Interacts with RNF113A; the interaction, enhanced by CXCL12, promotes CXCR4 ubiquitination and subsequent degradation. Interacts (via the cytoplasmic C-terminal) with ITCH (via the WW domains I and II); the interaction, enhanced by CXCL12, promotes CXCR4 ubiquitination and leads to its degradation. Interacts with extracellular ubiquitin. Interacts with DBN1; this interaction is enhanced by antigenic stimulation. Following LPS binding, may form a complex with GDF5, HSP90AA1 and HSPA8. In terms of processing, phosphorylated on agonist stimulation. Rapidly phosphorylated on serine and threonine residues in the C-terminal. Phosphorylation at Ser-325 and Ser-326 leads to recruitment of ITCH, ubiquitination and protein degradation. Ubiquitinated after ligand binding, leading to its degradation. Ubiquitinated by ITCH at the cell membrane on agonist stimulation. The ubiquitin-dependent mechanism, endosomal sorting complex required for transport (ESCRT), then targets CXCR4 for lysosomal degradation. This process is dependent also on prior Ser-/Thr-phosphorylation in the C-terminal of CXCR4. Also binding of ARRB1 to STAM negatively regulates CXCR4 sorting to lysosomes though modulating ubiquitination of SFR5S. Post-translationally, sulfation is required for efficient binding of CXCL12/SDF-1alpha and promotes its dimerization. In terms of processing, O- and N-glycosylated. N-glycosylation can mask coreceptor function. The O-glycosylation chondroitin sulfate attachment does not affect interaction with CXCL12/SDF-1alpha nor its coreceptor activity.

The protein resides in the cell membrane. Its subcellular location is the cell junction. The protein localises to the early endosome. It is found in the late endosome. It localises to the lysosome. Functionally, receptor for the C-X-C chemokine CXCL12/SDF-1 that transduces a signal by increasing intracellular calcium ion levels and enhancing MAPK1/MAPK3 activation. Involved in the AKT signaling cascade. Plays a role in regulation of cell migration, e.g. during wound healing. Acts as a receptor for extracellular ubiquitin; leading to enhanced intracellular calcium ions and reduced cellular cAMP levels. Binds bacterial lipopolysaccharide (LPS) et mediates LPS-induced inflammatory response, including TNF secretion by monocytes. Involved in hematopoiesis and in cardiac ventricular septum formation. Also plays an essential role in vascularization of the gastrointestinal tract, probably by regulating vascular branching and/or remodeling processes in endothelial cells. Involved in cerebellar development. In the CNS, could mediate hippocampal-neuron survival. In Felis catus (Cat), this protein is C-X-C chemokine receptor type 4 (CXCR4).